Reading from the N-terminus, the 391-residue chain is NADH-quinone oxidoreductase subunit D (391 aa).

This sequence belongs to the complex I 49 kDa subunit family. In terms of assembly, NDH-1 is composed of 14 different subunits. Subunits NuoB, C, D, E, F, and G constitute the peripheral sector of the complex.

It is found in the cell inner membrane. It carries out the reaction a quinone + NADH + 5 H(+)(in) = a quinol + NAD(+) + 4 H(+)(out). Functionally, NDH-1 shuttles electrons from NADH, via FMN and iron-sulfur (Fe-S) centers, to quinones in the respiratory chain. The immediate electron acceptor for the enzyme in this species is believed to be ubiquinone. Couples the redox reaction to proton translocation (for every two electrons transferred, four hydrogen ions are translocated across the cytoplasmic membrane), and thus conserves the redox energy in a proton gradient. The polypeptide is NADH-quinone oxidoreductase subunit D (Rickettsia conorii (strain ATCC VR-613 / Malish 7)).